The chain runs to 188 residues: Elongation factor P (188 aa).

Belongs to the elongation factor P family.

Its subcellular location is the cytoplasm. Its pathway is protein biosynthesis; polypeptide chain elongation. Functionally, involved in peptide bond synthesis. Stimulates efficient translation and peptide-bond synthesis on native or reconstituted 70S ribosomes in vitro. Probably functions indirectly by altering the affinity of the ribosome for aminoacyl-tRNA, thus increasing their reactivity as acceptors for peptidyl transferase. The chain is Elongation factor P from Parabacteroides distasonis (strain ATCC 8503 / DSM 20701 / CIP 104284 / JCM 5825 / NCTC 11152).